Here is a 751-residue protein sequence, read N- to C-terminus: Translation initiation factor IF-2, chloroplastic (751 aa).

Positions 86–156 (KKEKSKFRKD…KSKKQTSAKN (71 aa)) are disordered. The span at 93–106 (RKDEDYDSLKREDN) shows a compositional bias: basic and acidic residues. The segment covering 129–143 (VSNTNTLNKKNVVKS) has biased composition (low complexity). The tr-type G domain maps to 250–423 (KRPPVIAIMG…ILVSEIEDLK (174 aa)). The tract at residues 259–266 (GHVDHGKT) is G1. Position 259 to 266 (259 to 266 (GHVDHGKT)) interacts with GTP. The G2 stretch occupies residues 284-288 (GITQK). The interval 309-312 (DTPG) is G3. GTP contacts are provided by residues 309–313 (DTPGH) and 363–366 (NKID). Positions 363 to 366 (NKID) are G4. Positions 399-401 (SAM) are G5.

It belongs to the TRAFAC class translation factor GTPase superfamily. Classic translation factor GTPase family. IF-2 subfamily.

The protein resides in the plastid. It is found in the chloroplast. Its function is as follows. One of the essential components for the initiation of protein synthesis. Protects formylmethionyl-tRNA from spontaneous hydrolysis and promotes its binding to the 30S ribosomal subunits. Also involved in the hydrolysis of GTP during the formation of the 70S ribosomal complex. In Rhodomonas salina (Cryptomonas salina), this protein is Translation initiation factor IF-2, chloroplastic (infB).